The primary structure comprises 50 residues: uncharacterized protein (50 aa).

This is an uncharacterized protein from Dichelobacter nodosus (Bacteroides nodosus).